The sequence spans 170 residues: MVAASHRSPDRPGDPEGLEPGTGRGRRLGIDVGTVRIGVASSDPDGILATPLETVRRERSGKHLRRLATLVGETEAVEVIVGLPRTLADRIGSSAQDAIDLADELAARVAPIPVRLADERLTTVSAQRSLREAGVRAKNQRAVIDQAAAVAILQAWLDQRRTLAGGRADG.

The segment at 1 to 29 (MVAASHRSPDRPGDPEGLEPGTGRGRRLG) is disordered.

Belongs to the YqgF nuclease family.

The protein localises to the cytoplasm. Functionally, could be a nuclease involved in processing of the 5'-end of pre-16S rRNA. The sequence is that of Putative pre-16S rRNA nuclease from Mycobacterium ulcerans (strain Agy99).